Here is a 475-residue protein sequence, read N- to C-terminus: Ribulose bisphosphate carboxylase large chain (475 aa).

Residues 1-2 (MS) constitute a propeptide that is removed on maturation. N-acetylproline is present on P3. K14 carries the N6,N6,N6-trimethyllysine modification. The substrate site is built by N123 and T173. The active-site Proton acceptor is K175. Residue K177 coordinates substrate. 3 residues coordinate Mg(2+): K201, D203, and E204. K201 carries the post-translational modification N6-carboxylysine. The active-site Proton acceptor is H294. R295, H327, and S379 together coordinate substrate.

Belongs to the RuBisCO large chain family. Type I subfamily. Heterohexadecamer of 8 large chains and 8 small chains; disulfide-linked. The disulfide link is formed within the large subunit homodimers. Mg(2+) serves as cofactor. In terms of processing, the disulfide bond which can form in the large chain dimeric partners within the hexadecamer appears to be associated with oxidative stress and protein turnover.

Its subcellular location is the plastid. It localises to the chloroplast. It carries out the reaction 2 (2R)-3-phosphoglycerate + 2 H(+) = D-ribulose 1,5-bisphosphate + CO2 + H2O. The enzyme catalyses D-ribulose 1,5-bisphosphate + O2 = 2-phosphoglycolate + (2R)-3-phosphoglycerate + 2 H(+). RuBisCO catalyzes two reactions: the carboxylation of D-ribulose 1,5-bisphosphate, the primary event in carbon dioxide fixation, as well as the oxidative fragmentation of the pentose substrate in the photorespiration process. Both reactions occur simultaneously and in competition at the same active site. This chain is Ribulose bisphosphate carboxylase large chain, found in Platanus occidentalis (Sycamore).